The following is a 29-amino-acid chain: Cliotide T18 (29 aa).

Positions 1–29 (GLPICGETCFTGTCYTPGCTCSYPVCKKN) form a cross-link, cyclopeptide (Gly-Asn). 3 disulfides stabilise this stretch: Cys5-Cys19, Cys9-Cys21, and Cys14-Cys26.

Contains 3 disulfide bonds. In terms of processing, this is a cyclic peptide. As to expression, expressed in root nodules but not in seed.

Probably participates in a plant defense mechanism. This chain is Cliotide T18, found in Clitoria ternatea (Butterfly pea).